We begin with the raw amino-acid sequence, 504 residues long: Maturase K (504 aa).

This sequence belongs to the intron maturase 2 family. MatK subfamily.

The protein resides in the plastid. The protein localises to the chloroplast. Usually encoded in the trnK tRNA gene intron. Probably assists in splicing its own and other chloroplast group II introns. The sequence is that of Maturase K from Cynophalla hastata (Broadleaf caper).